The following is a 388-amino-acid chain: Acetate kinase (388 aa).

Position 8 (Asn8) interacts with Mg(2+). Lys15 serves as a coordination point for ATP. Arg88 contributes to the substrate binding site. The active-site Proton donor/acceptor is the Asp144. ATP contacts are provided by residues 202-206 (HLGNG), 276-278 (DMR), and 321-325 (GVGEN). Glu375 is a Mg(2+) binding site.

The protein belongs to the acetokinase family. Homodimer. It depends on Mg(2+) as a cofactor. Mn(2+) is required as a cofactor.

It localises to the cytoplasm. It catalyses the reaction acetate + ATP = acetyl phosphate + ADP. It participates in metabolic intermediate biosynthesis; acetyl-CoA biosynthesis; acetyl-CoA from acetate: step 1/2. Catalyzes the formation of acetyl phosphate from acetate and ATP. Can also catalyze the reverse reaction. The sequence is that of Acetate kinase from Mycoplasmoides gallisepticum (strain R(low / passage 15 / clone 2)) (Mycoplasma gallisepticum).